A 485-amino-acid polypeptide reads, in one-letter code: NADH-quinone oxidoreductase subunit N (485 aa).

14 helical membrane-spanning segments follow: residues 8–28 (LIAL…MLCI), 35–55 (FVNA…LYFV), 75–95 (FYTG…YPWL), 105–125 (FYLL…ANHL), 127–147 (SLFI…GYAF), 159–179 (YMLL…LIYA), 203–223 (LLAG…LVPF), 235–255 (PAPV…GAVM), 271–291 (IVLS…AVSQ), 297–317 (LLGY…IAVQ), 326–346 (VGVY…VVSL), 374–394 (AVMT…GFFG), 407–426 (LWWL…YYYL), and 449–469 (ALTA…FFGL).

This sequence belongs to the complex I subunit 2 family. As to quaternary structure, NDH-1 is composed of 13 different subunits. Subunits NuoA, H, J, K, L, M, N constitute the membrane sector of the complex.

Its subcellular location is the cell inner membrane. The catalysed reaction is a quinone + NADH + 5 H(+)(in) = a quinol + NAD(+) + 4 H(+)(out). Its function is as follows. NDH-1 shuttles electrons from NADH, via FMN and iron-sulfur (Fe-S) centers, to quinones in the respiratory chain. The immediate electron acceptor for the enzyme in this species is believed to be ubiquinone. Couples the redox reaction to proton translocation (for every two electrons transferred, four hydrogen ions are translocated across the cytoplasmic membrane), and thus conserves the redox energy in a proton gradient. The protein is NADH-quinone oxidoreductase subunit N of Pectobacterium atrosepticum (strain SCRI 1043 / ATCC BAA-672) (Erwinia carotovora subsp. atroseptica).